Consider the following 118-residue polypeptide: Vitelline membrane protein Vm32E (118 aa).

A signal peptide spans Met-1 to Ala-17. A VM domain is found at Gly-36–Thr-75.

The protein belongs to the vitelline membrane family.

The protein localises to the secreted. Major early eggshell protein. This Drosophila sechellia (Fruit fly) protein is Vitelline membrane protein Vm32E.